A 367-amino-acid polypeptide reads, in one-letter code: Cellular tumor antigen p53 (367 aa).

A transcription activation (acidic) region spans residues 1-30 (MAEEMEPLLEPTEVFMDLWSMLPYSMQQLP). The disordered stretch occupies residues 30–84 (PLPEDHSNWQELSPLEPSDPPPPPPPPPLPLAAAAPPPLNPPTPPRAAPSPVVPS). Pro residues predominate over residues 46–81 (PSDPPPPPPPPPLPLAAAAPPPLNPPTPPRAAPSPV). Residues 87–278 (DYGGDFDFRV…KIEEENFRKR (192 aa)) mediate DNA binding. Residues C161, H164, C224, and C228 each coordinate Zn(2+). An interaction with DNA region spans residues 259 to 266 (RVCACPGR). Disordered stretches follow at residues 275 to 303 (FRKR…KKRV) and 333 to 367 (LAEG…KGSD). The Bipartite nuclear localization signal signature appears at 286–302 (KRAMSPPTEAPEPPKKR). Residues 308 to 339 (NEIFYLQVRGRRRYEMLKEINEALQLAEGGSA) are oligomerization. The Nuclear export signal signature appears at 322–333 (EMLKEINEALQL). Residues 347–364 (RVKVEGPQPSCGKKLLQK) form a basic (repression of DNA-binding) region.

Belongs to the p53 family. In terms of assembly, binds DNA as a homotetramer. The cofactor is Zn(2+).

Its subcellular location is the cytoplasm. It localises to the nucleus. Functionally, multifunctional transcription factor that induces cell cycle arrest, DNA repair or apoptosis upon binding to its target DNA sequence. Acts as a tumor suppressor in many tumor types; induces growth arrest or apoptosis depending on the physiological circumstances and cell type. Negatively regulates cell division by controlling expression of a set of genes required for this process. One of the activated genes is an inhibitor of cyclin-dependent kinases. Apoptosis induction seems to be mediated either by stimulation of BAX and FAS antigen expression, or by repression of Bcl-2 expression. This Gallus gallus (Chicken) protein is Cellular tumor antigen p53 (TP53).